The sequence spans 682 residues: Pesticidal crystal protein Cry19Ba (682 aa).

It belongs to the delta endotoxin family.

In terms of biological role, promotes colloidosmotic lysis by binding to the midgut epithelial cells of mosquitos. Has larvicidal activity against Culex pipiens molestus, but not to Anopheles stephensi. The sequence is that of Pesticidal crystal protein Cry19Ba from Bacillus thuringiensis subsp. higo.